The primary structure comprises 287 residues: Beta-lactamase GES-1 (287 aa).

Positions 1–18 (MRFIHALLLAGIAHSAYA) are cleaved as a signal peptide. Cysteine 63 and cysteine 233 form a disulfide bridge. The active-site Nucleophile; acyl-ester intermediate is the serine 64. A beta-lactam-binding residues include lysine 67, serine 125, glutamate 161, and threonine 232.

The protein belongs to the class-A beta-lactamase family. In terms of assembly, monomer. May form dimers.

The enzyme catalyses a beta-lactam + H2O = a substituted beta-amino acid. With respect to regulation, inhibited by the beta-lactamase-blocking agents clavulanic acid, tazobactam, sulbactam and tazobactam and the carbapenem, imipenem. Inhibition by imipenem may involve Gly-165. Extended-spectrum beta-lactamase (ESBL) which confers resistance to penicillins, as well as first, second, third and fourth-generation cephalosporins. Has ceftazidime-hydrolyzing activity. Inactive against the carbapenems, imipenem, meropenem, ertapenem and doripenem. However, weak hydrolytic activity with respect to imipenem has also been reported. The sequence is that of Beta-lactamase GES-1 from Klebsiella pneumoniae.